The following is a 208-amino-acid chain: Uracil phosphoribosyltransferase (208 aa).

5-phospho-alpha-D-ribose 1-diphosphate is bound by residues arginine 78, arginine 103, and 130–138; that span reads DPMLATGGS. Uracil is bound by residues isoleucine 193 and 198 to 200; that span reads GDA. Residue aspartate 199 participates in 5-phospho-alpha-D-ribose 1-diphosphate binding.

Belongs to the UPRTase family. The cofactor is Mg(2+).

It catalyses the reaction UMP + diphosphate = 5-phospho-alpha-D-ribose 1-diphosphate + uracil. It functions in the pathway pyrimidine metabolism; UMP biosynthesis via salvage pathway; UMP from uracil: step 1/1. Its activity is regulated as follows. Allosterically activated by GTP. Its function is as follows. Catalyzes the conversion of uracil and 5-phospho-alpha-D-ribose 1-diphosphate (PRPP) to UMP and diphosphate. The sequence is that of Uracil phosphoribosyltransferase from Neisseria meningitidis serogroup A / serotype 4A (strain DSM 15465 / Z2491).